A 366-amino-acid chain; its full sequence is Aminomethyltransferase (366 aa).

The protein belongs to the GcvT family. In terms of assembly, the glycine cleavage system is composed of four proteins: P, T, L and H.

It carries out the reaction N(6)-[(R)-S(8)-aminomethyldihydrolipoyl]-L-lysyl-[protein] + (6S)-5,6,7,8-tetrahydrofolate = N(6)-[(R)-dihydrolipoyl]-L-lysyl-[protein] + (6R)-5,10-methylene-5,6,7,8-tetrahydrofolate + NH4(+). Its function is as follows. The glycine cleavage system catalyzes the degradation of glycine. This Bordetella bronchiseptica (strain ATCC BAA-588 / NCTC 13252 / RB50) (Alcaligenes bronchisepticus) protein is Aminomethyltransferase.